The chain runs to 501 residues: Beta-secretase 1 (501 aa).

A signal peptide spans 1–21; it reads MAPALRWLLLWVGSGMLPAQG. A propeptide spanning residues 22-45 is cleaved from the precursor; sequence THLGIRLPLRSGLAGPPLGLRLPR. Residues 22 to 457 are Extracellular-facing; it reads THLGIRLPLR…PQTDESTLMT (436 aa). The 342-residue stretch at 75–416 folds into the Peptidase A1 domain; sequence YYVEMTVGSP…DRARKRIGFA (342 aa). Asp-93 is an active-site residue. N6-acetyllysine is present on Lys-126. 3 N-linked (GlcNAc...) asparagine glycosylation sites follow: Asn-153, Asn-172, and Asn-223. Intrachain disulfides connect Cys-216/Cys-420, Cys-278/Cys-443, and Cys-330/Cys-380. Lys-275, Lys-279, and Lys-285 each carry N6-acetyllysine. Asp-289 is a catalytic residue. Lys-299, Lys-300, and Lys-307 each carry N6-acetyllysine. N-linked (GlcNAc...) asparagine glycosylation is present at Asn-354. Residues 458-478 form a helical membrane-spanning segment; that stretch reads IAYVMAAICALFMLPLCLMVC. 4 S-palmitoyl cysteine lipidation sites follow: Cys-474, Cys-478, Cys-482, and Cys-485. Residues 479 to 501 are Cytoplasmic-facing; that stretch reads QWRCLRCLRHQHDDFADDISLLK. The interaction with RTN3 stretch occupies residues 479–501; the sequence is QWRCLRCLRHQHDDFADDISLLK. The DXXLL signature appears at 496 to 500; sequence DISLL. A Phosphoserine modification is found at Ser-498. A Glycyl lysine isopeptide (Lys-Gly) (interchain with G-Cter in ubiquitin) cross-link involves residue Lys-501.

It belongs to the peptidase A1 family. In terms of assembly, monomer. Interacts (via DXXLL motif) with GGA1, GGA2 and GGA3 (via their VHS domain); the interaction highly increases when BACE1 is phosphorylated at Ser-498. Interacts with RTN1; RTN2; RTN3 and RTN4; the interaction leads to inhibition of amyloid precursor protein processing. Interacts with SNX6. Interacts with PCSK9. Interacts with NAT8 and NAT8B. Interacts with BIN1. Interacts (via extracellular domain) with ADAM10 (via extracellular domain). Interacts with SORL1; this interaction may affect binding with APP and hence reduce APP cleavage. Interacts with NRDC AND NRG1. In terms of processing, palmitoylation mediates lipid raft localization. Acetylated in the endoplasmic reticulum at Lys-126, Lys-275, Lys-279, Lys-285, Lys-299, Lys-300 and Lys-307. Acetylation by NAT8 and NAT8B is transient and deacetylation probably occurs in the Golgi. Acetylation regulates the maturation, the transport to the plasma membrane, the stability and the expression of the protein. Post-translationally, ubiquitinated at Lys-501, ubiquitination leads to lysosomal degradation. Monoubiquitinated and 'Lys-63'-linked polyubitinated. Deubiquitnated by USP8; inhibits lysosomal degradation. In terms of processing, phosphorylation at Ser-498 is required for interaction with GGA1 and retrograded transport from endosomal compartments to the trans-Golgi network. Non-phosphorylated BACE1 enters a direct recycling route to the cell surface. N-Glycosylated. Addition of a bisecting N-acetylglucosamine by MGAT3 blocks lysosomal targeting, further degradation and is required for maintaining stability under stress conditions.

It is found in the cell membrane. The protein resides in the golgi apparatus. It localises to the trans-Golgi network. Its subcellular location is the endoplasmic reticulum. The protein localises to the endosome. It is found in the cell surface. The protein resides in the cytoplasmic vesicle membrane. It localises to the membrane raft. Its subcellular location is the lysosome. The protein localises to the late endosome. It is found in the early endosome. The protein resides in the recycling endosome. It localises to the cell projection. Its subcellular location is the axon. The protein localises to the dendrite. The enzyme catalyses Broad endopeptidase specificity. Cleaves Glu-Val-Asn-Leu-|-Asp-Ala-Glu-Phe in the Swedish variant of Alzheimer's amyloid precursor protein.. With respect to regulation, inhibited by RTN3 and RTN4. Its function is as follows. Responsible for the proteolytic processing of the amyloid precursor protein (APP). Cleaves at the N-terminus of the A-beta peptide sequence, between residues 671 and 672 of APP, leads to the generation and extracellular release of beta-cleaved soluble APP, and a corresponding cell-associated C-terminal fragment which is later released by gamma-secretase. Cleaves CHL1. This chain is Beta-secretase 1 (Bace1), found in Rattus norvegicus (Rat).